A 259-amino-acid polypeptide reads, in one-letter code: Ribosome maturation factor RimP (259 aa).

Residues Arg-186–Lys-195 are compositionally biased toward basic and acidic residues. Residues Arg-186 to Asp-259 form a disordered region. The segment covering Lys-239–Ser-248 has biased composition (basic residues).

Belongs to the RimP family.

The protein localises to the cytoplasm. Required for maturation of 30S ribosomal subunits. This Rhodopseudomonas palustris (strain HaA2) protein is Ribosome maturation factor RimP.